We begin with the raw amino-acid sequence, 1200 residues long: NACHT, LRR and PYD domains-containing protein 5 (1200 aa).

One can recognise a Pyrin domain in the interval 57–148 (SLTFSSYGLQ…SEKARDDMKR (92 aa)). Over residues 142-152 (ARDDMKRHSPE) the composition is skewed to basic and acidic residues. The tract at residues 142–232 (ARDDMKRHSP…TEEQGHGGDT (91 aa)) is disordered. Residues 173–182 (QAVQQDSATA) are compositionally biased toward polar residues. Low complexity-rich tracts occupy residues 192–202 (QAMEQEGATAA) and 209–221 (ISQA…ATAA). The region spanning 280 to 602 (RTVVLHGKSG…ALYYVLEGLE (323 aa)) is the NACHT domain. 286-293 (GKSGIGKS) provides a ligand contact to ATP. LRR repeat units lie at residues 704–727 (LNSF…SFCL), 730–753 (CPYL…AEAC), 780–803 (HPHL…TLCA), 809–832 (TCKI…LWRI), 836–863 (NRNL…ALKH), 865–892 (KCLL…ILTT), 893–916 (SPSL…PLSD), 950–973 (NRSL…LLCR), 979–1002 (HCSL…FLAL), 1007–1034 (NSWL…VMRE), 1036–1059 (SCHL…SLSC), 1064–1092 (SRHL…LKQK), and 1121–1142 (NRHL…MMKL).

It belongs to the NLRP family. As to quaternary structure, component of the subcortical maternal complex (SCMC), at least composed of NLRP5, KHDC3, OOEP, and TLE6 isoform 1. Within the complex, interacts with OOEP, KHDC3L and TLE6. The SCMC may facilitate translocation of its components between the nuclear and cytoplasmic compartments. As part of the SCMC interacts with the SCMC-associated protein ZBED3. As part of the SCMC interacts with the SCMC-associated protein CFL1/Cofilin-1. Interacts with PRKCE. Interacts with TUBB3 at cytoskeleton microtubules. In terms of processing, phosphorylated by PRKCE. Expressed in cumulus cells (at protein level). Highly abundant in oocytes and early embryos, however poorly expressed in somatic tissues such as the liver and spinal cord.

Its subcellular location is the cytoplasm. It localises to the cytoplasmic vesicle. It is found in the secretory vesicle. The protein resides in the cortical granule. The protein localises to the mitochondrion. Its subcellular location is the nucleus. It localises to the nucleolus. It is found in the golgi apparatus. Its function is as follows. Component of the subcortical maternal complex (SCMC), a multiprotein complex that plays a key role in early embryonic development. The SCMC complex is a structural constituent of cytoplasmic lattices, which consist in fibrous structures found in the cytoplasm of oocytes and preimplantation embryos. They are required to store maternal proteins critical for embryonic development, such as proteins that control epigenetic reprogramming of the preimplantation embryo, and prevent their degradation or activation. Required for the localization of cortical granules to the cortex of oocytes, via association with the cortical actin scaffold. Required for cortical actin clearance prior to oocyte exocytosis and prevention of polyspermy. Involved in regulating post-fertilization Ca(2+) release and endoplasmic reticulum storage (ER) storage via regulation of cellular localization. May be involved in the localization of mitochondria to the cytoplasm and perinuclear region in oocytes and early stage embryos, independent of its role in CPL formation. In Homo sapiens (Human), this protein is NACHT, LRR and PYD domains-containing protein 5 (NLRP5).